A 608-amino-acid polypeptide reads, in one-letter code: MRVLYIHAERFNWEPRDPALDIRDEPTSGNANNALVVFTSVERGDVPDENFLRAVASDIIDVAKKVKASAIVIYPYAHLSSDLARPYTAREVLNKLFEVVKSQFNGEVLKAPFGYYKAFEIKCLGHPLSELSRSFKPEEGRADRRAEERRDYYVIITPNGEEHDPAKFNYANYGDLKALVEKEVFRKELGGGEPKYLEYLRKFGFEWEPMSDAGHMRYAPEATVMMELVEDYSYIVAKSLGIPVFKIRGTNMFKLSEKAIESHARLFGERLYIVESDTDLILRYAACFQQFAMAKDWVISYKHLPFGMLEIADSYRHEQPGETVLLFRLRRFYMPDLHIFTKDLKEAMEVTYKLHEVIFREIGKLGRTYVSLYNVTEGFYKNHRDYLVELARREGKPILVRVLPGQKYYWVLNVEFHIVDELGRPREIATFQIDVGNAQRFGIKYVDENNQIKYPVIIHTAILGSVERYLYAVFDTMAKMEKEGKVPRLPTWLSPVQVRVIPVSKENLKYAISIADVLEAEGIRVDIDDREETLSKKIRDAETSWIPYIVVVGSKEEAEGVIAVRERGGGQYKIRLEELVKKLKDETRGYPQRPLYLPRLLSQRPSRF.

The tract at residues 1 to 143 (MRVLYIHAER…SFKPEEGRAD (143 aa)) is editing domain. Catalytic stretches follow at residues 194-490 (PKYL…PRLP) and 195-490 (KYLE…PRLP). Zn(2+) contacts are provided by Cys-287, His-338, and His-459.

The protein belongs to the class-II aminoacyl-tRNA synthetase family. In terms of assembly, homodimer. The cofactor is Zn(2+).

The protein resides in the cytoplasm. It carries out the reaction tRNA(Thr) + L-threonine + ATP = L-threonyl-tRNA(Thr) + AMP + diphosphate + H(+). Its function is as follows. Catalyzes the attachment of threonine to tRNA(Thr) in a two-step reaction: L-threonine is first activated by ATP to form Thr-AMP and then transferred to the acceptor end of tRNA(Thr). Also edits incorrectly charged L-seryl-tRNA(Thr). The chain is Threonine--tRNA ligase from Pyrobaculum aerophilum (strain ATCC 51768 / DSM 7523 / JCM 9630 / CIP 104966 / NBRC 100827 / IM2).